The primary structure comprises 212 residues: External core antigen (212 aa).

The N-terminal stretch at 1 to 19 is a signal peptide; the sequence is MQLFHLCLIISCSCPTVQA. Positions 25–27 are HBEAG; it reads GWL. The disordered stretch occupies residues 179–212; the sequence is RQRGRTIRRRTPSPRRRRSQSPRRRRSQSRESQC. Residues 180–205 show a composition bias toward basic residues; sequence QRGRTIRRRTPSPRRRRSQSPRRRRS. The 1; half-length repeat unit spans residues 184–190; it reads TIRRRTP. The interval 184–206 is 3 X 8 AA repeats of S-P-R-R-R-R-S-Q; that stretch reads TIRRRTPSPRRRRSQSPRRRRSQ. Residues 184-212 constitute a propeptide that is removed on maturation; sequence TIRRRTPSPRRRRSQSPRRRRSQSRESQC. Tandem repeats lie at residues 191–198 and 199–206.

It belongs to the orthohepadnavirus precore antigen family. As to quaternary structure, homodimerizes. In terms of processing, phosphorylated. Cleaved by host furin.

It is found in the secreted. It localises to the host nucleus. May regulate immune response to the intracellular capsid in acting as a T-cell tolerogen, by having an immunoregulatory effect which prevents destruction of infected cells by cytotoxic T-cells. This immune regulation may predispose to chronicity during perinatal infections and prevent severe liver injury during adult infections. This is External core antigen from Hepatitis B virus genotype D subtype ayw (isolate Australia/AustKW/1991) (HBV-D).